A 473-amino-acid polypeptide reads, in one-letter code: Glutathione reductase, mitochondrial (473 aa).

Serine 30 and glycine 31 together coordinate FAD. Serine 30 contacts glutathione. Arginine 37 provides a ligand contact to glutathione. FAD is bound by residues glutamate 50, threonine 57, cysteine 58, and lysine 66. Cysteine 58 and cysteine 63 are disulfide-bonded. Residue tyrosine 114 coordinates glutathione. Residue alanine 130 participates in FAD binding. Residues alanine 190, isoleucine 193, glutamate 196, arginine 213, arginine 219, and glycine 279 each contribute to the NADP(+) site. FAD is bound at residue aspartate 320. Residue leucine 326 coordinates NADP(+). FAD is bound at residue threonine 328. Arginine 336 serves as a coordination point for glutathione. Valine 359 is a binding site for NADP(+). An FAD-binding site is contributed by histidine 456. Histidine 456 (proton acceptor) is an active-site residue.

This sequence belongs to the class-I pyridine nucleotide-disulfide oxidoreductase family. It depends on FAD as a cofactor. As to expression, expressed at all larval stages and in adults in intestine, vulva muscle, pharynx and some cells in the tail.

The protein localises to the cytoplasm. Its subcellular location is the mitochondrion. The catalysed reaction is 2 glutathione + NADP(+) = glutathione disulfide + NADPH + H(+). In terms of biological role, catalyzes the reduction of glutathione disulfide (GSSG) to reduced glutathione (GSH). Constitutes the major mechanism to maintain a high GSH:GSSG ratio in the cytosol. Involved in resistance to oxidative stress and starvation. Together with thioredoxin reductase txtr-1, required for the reduction of disulfide groups in the cuticle during molting. This chain is Glutathione reductase, mitochondrial, found in Caenorhabditis elegans.